The following is a 112-amino-acid chain: Phosphoribosyl-ATP pyrophosphatase (112 aa).

The protein belongs to the PRA-PH family.

The protein resides in the cytoplasm. It carries out the reaction 1-(5-phospho-beta-D-ribosyl)-ATP + H2O = 1-(5-phospho-beta-D-ribosyl)-5'-AMP + diphosphate + H(+). Its pathway is amino-acid biosynthesis; L-histidine biosynthesis; L-histidine from 5-phospho-alpha-D-ribose 1-diphosphate: step 2/9. The protein is Phosphoribosyl-ATP pyrophosphatase of Chromohalobacter salexigens (strain ATCC BAA-138 / DSM 3043 / CIP 106854 / NCIMB 13768 / 1H11).